A 370-amino-acid chain; its full sequence is Mitogen-activated protein kinase 3 (370 aa).

One can recognise a Protein kinase domain in the interval 32-319 (YVPIKPIGRG…VTEALEHPYM (288 aa)). Residues 38–46 (IGRGAYGIV) and Lys61 contribute to the ATP site. Asp158 acts as the Proton acceptor in catalysis. The residue at position 191 (Thr191) is a Phosphothreonine. Positions 191–193 (TEY) match the TXY motif. Tyr193 bears the Phosphotyrosine mark.

Belongs to the protein kinase superfamily. CMGC Ser/Thr protein kinase family. MAP kinase subfamily. Post-translationally, dually phosphorylated on Thr-191 and Tyr-193, which activates the enzyme.

The enzyme catalyses L-seryl-[protein] + ATP = O-phospho-L-seryl-[protein] + ADP + H(+). It carries out the reaction L-threonyl-[protein] + ATP = O-phospho-L-threonyl-[protein] + ADP + H(+). Activated by threonine and tyrosine phosphorylation. This chain is Mitogen-activated protein kinase 3 (MPK3), found in Oryza sativa subsp. japonica (Rice).